Here is a 335-residue protein sequence, read N- to C-terminus: Ketol-acid reductoisomerase (NADP(+)) (335 aa).

A KARI N-terminal Rossmann domain is found at 5-185 (SKIYTDNDAN…GATRAGVIPT (181 aa)). NADP(+)-binding positions include 28 to 31 (YGSQ), serine 56, and 86 to 89 (DMVQ). Residue histidine 111 is part of the active site. Glycine 137 is a binding site for NADP(+). The region spanning 186–331 (TFKEETETDL…NQLRDLVQKG (146 aa)) is the KARI C-terminal knotted domain. Aspartate 194, glutamate 198, glutamate 230, and glutamate 234 together coordinate Mg(2+). Serine 255 is a binding site for substrate.

It belongs to the ketol-acid reductoisomerase family. Mg(2+) serves as cofactor.

It carries out the reaction (2R)-2,3-dihydroxy-3-methylbutanoate + NADP(+) = (2S)-2-acetolactate + NADPH + H(+). The enzyme catalyses (2R,3R)-2,3-dihydroxy-3-methylpentanoate + NADP(+) = (S)-2-ethyl-2-hydroxy-3-oxobutanoate + NADPH + H(+). Its pathway is amino-acid biosynthesis; L-isoleucine biosynthesis; L-isoleucine from 2-oxobutanoate: step 2/4. It participates in amino-acid biosynthesis; L-valine biosynthesis; L-valine from pyruvate: step 2/4. In terms of biological role, involved in the biosynthesis of branched-chain amino acids (BCAA). Catalyzes an alkyl-migration followed by a ketol-acid reduction of (S)-2-acetolactate (S2AL) to yield (R)-2,3-dihydroxy-isovalerate. In the isomerase reaction, S2AL is rearranged via a Mg-dependent methyl migration to produce 3-hydroxy-3-methyl-2-ketobutyrate (HMKB). In the reductase reaction, this 2-ketoacid undergoes a metal-dependent reduction by NADPH to yield (R)-2,3-dihydroxy-isovalerate. The sequence is that of Ketol-acid reductoisomerase (NADP(+)) from Saccharolobus solfataricus (strain ATCC 35092 / DSM 1617 / JCM 11322 / P2) (Sulfolobus solfataricus).